The chain runs to 769 residues: Homoaconitase, mitochondrial (769 aa).

Residues 1–28 (MQSRLLPSGPGRRWISLRVPNTPQRRAF) constitute a mitochondrion transit peptide. Positions 391, 460, and 463 each coordinate [4Fe-4S] cluster.

This sequence belongs to the aconitase/IPM isomerase family. It depends on [4Fe-4S] cluster as a cofactor.

The protein resides in the mitochondrion. The enzyme catalyses (2R,3S)-homoisocitrate = cis-homoaconitate + H2O. It participates in amino-acid biosynthesis; L-lysine biosynthesis via AAA pathway; L-alpha-aminoadipate from 2-oxoglutarate: step 3/5. In terms of biological role, catalyzes the reversible hydration of cis-homoaconitate to (2R,3S)-homoisocitrate, a step in the alpha-aminoadipate pathway for lysine biosynthesis. This Aspergillus niger (strain ATCC MYA-4892 / CBS 513.88 / FGSC A1513) protein is Homoaconitase, mitochondrial (lysA).